The primary structure comprises 177 residues: B-phycoerythrin beta chain (177 aa).

Phycourobilin contacts are provided by C50 and C61. N72 is subject to N4-methylasparagine. 2 residues coordinate (2R,3E)-phycoerythrobilin: C82 and C158.

This sequence belongs to the phycobiliprotein family. In terms of assembly, heteromer of 6 alpha, 6 beta and one gamma chain. Contains two covalently linked phycoerythrobilin chromophores and one covalently linked phycourobilin chromophore.

The protein resides in the plastid. It localises to the chloroplast thylakoid membrane. In terms of biological role, light-harvesting photosynthetic bile pigment-protein from the phycobiliprotein complex. In Porphyridium sordidum (Red alga), this protein is B-phycoerythrin beta chain (cpeB).